The following is a 370-amino-acid chain: Probable dual-specificity RNA methyltransferase RlmN (370 aa).

The active-site Proton acceptor is the Glu91. In terms of domain architecture, Radical SAM core spans 97–329 (QHYGLSVCVT…KKNGVNCVVR (233 aa)). Cys104 and Cys340 form a disulfide bridge. Residues Cys111, Cys115, and Cys118 each contribute to the [4Fe-4S] cluster site. Residues 163–164 (GE), Ser195, 218–220 (SLH), and Asn296 contribute to the S-adenosyl-L-methionine site. Catalysis depends on Cys340, which acts as the S-methylcysteine intermediate.

The protein belongs to the radical SAM superfamily. RlmN family. The cofactor is [4Fe-4S] cluster.

The protein resides in the cytoplasm. It carries out the reaction adenosine(2503) in 23S rRNA + 2 reduced [2Fe-2S]-[ferredoxin] + 2 S-adenosyl-L-methionine = 2-methyladenosine(2503) in 23S rRNA + 5'-deoxyadenosine + L-methionine + 2 oxidized [2Fe-2S]-[ferredoxin] + S-adenosyl-L-homocysteine. It catalyses the reaction adenosine(37) in tRNA + 2 reduced [2Fe-2S]-[ferredoxin] + 2 S-adenosyl-L-methionine = 2-methyladenosine(37) in tRNA + 5'-deoxyadenosine + L-methionine + 2 oxidized [2Fe-2S]-[ferredoxin] + S-adenosyl-L-homocysteine. In terms of biological role, specifically methylates position 2 of adenine 2503 in 23S rRNA and position 2 of adenine 37 in tRNAs. The sequence is that of Probable dual-specificity RNA methyltransferase RlmN from Streptococcus suis (strain 98HAH33).